The chain runs to 315 residues: Taste receptor type 2 member 3 (315 aa).

Residues 1 to 5 (MGLTD) lie on the Extracellular side of the membrane. Residues 6 to 26 (GVFLIVCGAQFTLGILXNGFI) traverse the membrane as a helical segment. The Cytoplasmic portion of the chain corresponds to 27-41 (GLVNGRSWFKTKRMS). Residues 42 to 62 (LSDFIIATLALSRIILLCIIL) form a helical membrane-spanning segment. The Extracellular segment spans residues 63 to 93 (TDSFLIVFSVKEHDSGIIMQLIDVFWTFTNH). Residues 94 to 114 (LSIWFATCLGVLYCLKIASFS) traverse the membrane as a helical segment. Over 115 to 127 (HPTFLWLKWRVSR) the chain is Cytoplasmic. A helical membrane pass occupies residues 128-148 (VMVWMLLGALLLSCGSTASLI). The Extracellular segment spans residues 149–185 (NEFKLYSVLRGIEATRNVTEHFRKKRNEYYLIHVLGT). Residue asparagine 165 is glycosylated (N-linked (GlcNAc...) asparagine). The chain crosses the membrane as a helical span at residues 186-206 (LWYLPPLVVSLASYFLLIFSL). Residues 207–233 (GRHTRQMLQNSTSSRDPSTEAHKRAIR) are Cytoplasmic-facing. A helical transmembrane segment spans residues 234-254 (IILSFFFLFLLYFLAFLIASF). Residues 255–265 (GNFLPETKMAK) are Extracellular-facing. Residues 266-286 (MIGEVMTMFYPAGHSFIVILG) form a helical membrane-spanning segment. The Cytoplasmic portion of the chain corresponds to 287 to 315 (NSKLKQTFVEMLRCESGHLKPGSKGPIFS).

Belongs to the G-protein coupled receptor T2R family.

The protein localises to the membrane. In terms of biological role, gustducin-coupled receptor implicated in the perception of bitter compounds in the oral cavity and the gastrointestinal tract. Signals through PLCB2 and the calcium-regulated cation channel TRPM5. This Papio hamadryas (Hamadryas baboon) protein is Taste receptor type 2 member 3 (TAS2R3).